Consider the following 581-residue polypeptide: Arginine--tRNA ligase (581 aa).

The short motif at 126–136 (PNLAKEMHVGH) is the 'HIGH' region element.

This sequence belongs to the class-I aminoacyl-tRNA synthetase family. In terms of assembly, monomer.

It is found in the cytoplasm. The catalysed reaction is tRNA(Arg) + L-arginine + ATP = L-arginyl-tRNA(Arg) + AMP + diphosphate. This chain is Arginine--tRNA ligase, found in Shewanella sp. (strain MR-4).